We begin with the raw amino-acid sequence, 341 residues long: MKGLSEGLILGIESSCDETAAAVVAGGRRVLSNTVASQVDLFRKYGGVVPEIASRRHLELILPVIREALQMAGVTLEQIDAVAVTHGPGLVGTLLVGLSAAKALAFGLDKPLIGVNHLQGHIYANFLVEPPPEFPLVCLVVSGGHTDLIYMAGHGRMELLGRTLDDAAGEAFDKVARSVGLGYPGGPQVEKLARSGDPEAVPLPRAHTEGPYDFSFSGLKTAVLQYVQRTGPLNDQQRADLAASFQRAVTSVLVERTVKAAEAKGVRQVILAGGVAANGALREEMRAALEPRGIRLGYPPPVLCTDNAAMIAAAGYYLWRAGVRHDLDLNAVPGLGLGIGG.

Fe cation is bound by residues His-117 and His-121. Substrate-binding positions include 140–144, Asp-173, Gly-186, and Asn-278; that span reads VVSGG. Asp-306 provides a ligand contact to Fe cation.

Belongs to the KAE1 / TsaD family. Requires Fe(2+) as cofactor.

The protein resides in the cytoplasm. It carries out the reaction L-threonylcarbamoyladenylate + adenosine(37) in tRNA = N(6)-L-threonylcarbamoyladenosine(37) in tRNA + AMP + H(+). Its function is as follows. Required for the formation of a threonylcarbamoyl group on adenosine at position 37 (t(6)A37) in tRNAs that read codons beginning with adenine. Is involved in the transfer of the threonylcarbamoyl moiety of threonylcarbamoyl-AMP (TC-AMP) to the N6 group of A37, together with TsaE and TsaB. TsaD likely plays a direct catalytic role in this reaction. The protein is tRNA N6-adenosine threonylcarbamoyltransferase of Symbiobacterium thermophilum (strain DSM 24528 / JCM 14929 / IAM 14863 / T).